The sequence spans 1299 residues: MLDVTTFDELRIGLATADDIRRWSHGEVKKPETINYRTLKPEKDGLFGEQIFGPSRDWECSCGKYKRVRFKGIVCERCGVEVTKSAVRRERMGHIELAAPVTHIWYFKGVPSRLGYLLDMAPKDLEKVIYFAAYMVISVDEDARHEDMPGLENELRLEIKTLQDQRDSQIAERLGRLETDLAALEAEGAKSDQKRRAKDGAEKEMGQTRKAFDEDISRLERVWEEFRSLKVGELKPEDAVFHELQDRFGIYFEAHMGAEAIQKRLEAFDLEAEGELLREQIATGKGQKKIRAIKRLRVVSSFLATGNSPAAMVLQVVPVIPPELRPMVQLDGGRFATSDLNDLYRRVINRNNRLRRLLDLGAPEIIVNNEKRMLQEAVDALFDNGRRGRPVTGTGNRALKSLSDMLKGKQGRFRQNLLGKRVDYSGRSVIIVGPQLKLHQCGLPKQMALELFKPFVIKRLIDLSHAQNIKAAKRMVERSRGQVWDVLEEIIRERPVLLNRAPTLHRLGIQAFEPQLVEGKAIQLHPLVCAAFNADFDGDQMAVHLPLSVEAQAEARILMLASNNILKPSDGRPVTLPTQDMIIGLHHLTTLKEGVAGEGRAFSSVAEAILAKDQLSLDLNAKVRIRLHDIYFGEGEAPEGVELDEKGKTVGPVLLETTLGRALFNETLPVDYPYIEAVADKGKLSEIVNDLAERYPKVEVAAALDRIKDAGFYWATRSGVTVALSDVLTPPTKAAILSGYEKQAAKVQGQFEKGLTTNAERRQELIEIWNKATAEVAKAMEDNLPADNNINRMVSSGARGNWMQVRQIAGMRGLVSNPKGEIIPRPIVHSYREGLTVAEYFISTHGARKGLADTALRTADSGYLTRRLVDVSQDVIIREDDCGTSRGLDLPIATKGADGSSVRDSNVENSVYARSLAADAVNEAGEVVAPAGSDVGDVMIDHLIAAGVHEIKVRSVLTCESAVGVCAACYGRSLATGKLVDIGEVVGIIAAQSIGEPGTQLTMRTFHTGGVASADDITQGLPRVQELFEARTPKGASPIAEAAGRITIEDTDRSRKVILTPDNGDEPHIYPVLKRATLLVEDGQHVELGQQLHVGAIDPKEVLRVKGVREVQKHLVGGVQGVYRSQGVPIHDKHIEVIVRQMLRKVTVVEHGDTDLLPGELVDRARYNEVNRATLTEGKKTASARQEVMGITKASLATESWLSAASFQETTRVLTQAAMEGKSDPLMGLKENVIIGKLIPAGTGLAKYRDVTVTATEEAKAERYPNRIFTDESVFNESDLSFVDFDSFSSDDYTPGTYN.

Residues Cys60, Cys62, Cys75, and Cys78 each contribute to the Zn(2+) site. Residues 188–209 (GAKSDQKRRAKDGAEKEMGQTR) are disordered. Positions 535, 537, and 539 each coordinate Mg(2+). Zn(2+)-binding residues include Cys882, Cys959, Cys966, and Cys969.

Belongs to the RNA polymerase beta' chain family. The RNAP catalytic core consists of 2 alpha, 1 beta, 1 beta' and 1 omega subunit. When a sigma factor is associated with the core the holoenzyme is formed, which can initiate transcription. Mg(2+) serves as cofactor. It depends on Zn(2+) as a cofactor.

The enzyme catalyses RNA(n) + a ribonucleoside 5'-triphosphate = RNA(n+1) + diphosphate. Functionally, DNA-dependent RNA polymerase catalyzes the transcription of DNA into RNA using the four ribonucleoside triphosphates as substrates. This Clavibacter sepedonicus (Clavibacter michiganensis subsp. sepedonicus) protein is DNA-directed RNA polymerase subunit beta'.